The chain runs to 236 residues: Growth-regulating factor 12 (236 aa).

The interval 1–27 (MLAEGRQVYLPPPPPSKLPRLSGTDPT) is disordered. Residues 74–109 (ALTFMQRQELEQQVLIYRYFAAGAPVPVHLVLPIWK) enclose the QLQ domain. A WRC domain is found at 140 to 184 (EPEPGRCRRTDGKKWRCSRDVVPGHKYCERHVHRGRGRSRKPMEA). 2 consecutive short sequence motifs (bipartite nuclear localization signal) follow at residues 145 to 155 (RCRRTDGKKWR) and 173 to 180 (RGRGRSRK).

Belongs to the GRF family.

It localises to the nucleus. Transcription activator that plays a regulatory role in gibberellin-induced stem elongation. The protein is Growth-regulating factor 12 (GRF12) of Oryza sativa subsp. japonica (Rice).